A 185-amino-acid polypeptide reads, in one-letter code: Iron-sulfur assembly protein 2 (185 aa).

Cys89, Cys175, and Cys177 together coordinate Fe cation.

The protein belongs to the HesB/IscA family.

It localises to the mitochondrion matrix. Involved in the assembly of mitochondrial and cytoplasmic iron-sulfur proteins. Probably involved in the binding of an intermediate of Fe/S cluster assembly. This is Iron-sulfur assembly protein 2 (ISA2) from Saccharomyces cerevisiae (strain ATCC 204508 / S288c) (Baker's yeast).